The chain runs to 833 residues: Heat shock transcription factor (833 aa).

N-acetylmethionine is present on Met1. The span at 1-16 shows a compositional bias: polar residues; it reads MNNAANTGTTNESNVS. 2 disordered regions span residues 1–31 and 62–92; these read MNNA…NDDD and NPSL…STHL. Residues 69–80 are compositionally biased toward low complexity; it reads SAASPVPSSSFF. Thr97 carries the post-translational modification Phosphothreonine. The span at 150–161 shows a compositional bias: polar residues; sequence PSSGTTNAQPRQ. Disordered regions lie at residues 150-170 and 277-309; these read PSSG…QSHK and GSSN…NNSN. Residues 170 to 259 mediate DNA binding; it reads KSRPAFVNKL…SDDKWQFENE (90 aa). The segment at 260 to 280 is flexible linker; it reads NFIRGREDLLEKIIRQKGSSN. Over residues 277–296 the composition is skewed to low complexity; that stretch reads GSSNNHNSPSGNGNPANGSN. The segment at 350 to 403 is involved in trimerization; it reads ELEQIKYNQIAISKDLLRINKDNELLWQENMMARERHRTQQQALEKMFRFLTSI. Residues 447-457 are compositionally biased toward basic and acidic residues; the sequence is SNDSFINDDRN. Residues 447–493 form a disordered region; sequence SNDSFINDDRNSFTNATTNARNNMSPNNDDNSIDTASTNTTNRKKNI. 5 positions are modified to phosphoserine: Ser450, Ser458, Ser471, Ser478, and Ser528. Residues 458–487 are compositionally biased toward polar residues; it reads SFTNATTNARNNMSPNNDDNSIDTASTNTT. Positions 542-554 are enriched in polar residues; sequence RANSSTSSENPSL. Disordered stretches follow at residues 542–626, 657–765, and 778–799; these read RANS…HNES, GYPN…RVSP, and SDNL…APEN. Positions 571–580 are enriched in acidic residues; the sequence is PFDDEEEEET. Residues 588 to 600 are compositionally biased toward polar residues; it reads RDPNNQTSENTFD. Residues 610–626 show a composition bias toward basic and acidic residues; sequence DDLKKDSHTNDNKHNES. Low complexity predominate over residues 660–675; the sequence is NKSFNNKTSSTNTNSN. Residues 676–687 are compositionally biased toward polar residues; the sequence is MESAVNVNSPGF. Positions 697-713 are enriched in low complexity; that stretch reads SNSPNSVHSVPSNGSGS. Polar residues-rich tracts occupy residues 727-739, 752-763, and 778-794; these read ASTS…NGSG, NDNNTSEGSTRV, and SDNL…TQAD.

This sequence belongs to the HSF family. Homotrimer. Homotrimerization increases the affinity of HSF1 to DNA. Post-translationally, exhibits temperature-dependent phosphorylation that activates the transcriptional capacity.

The protein localises to the nucleus. In terms of biological role, DNA-binding transcription factor that specifically binds heat shock promoter elements (HSE) and activates transcription. This is Heat shock transcription factor from Saccharomyces cerevisiae (strain ATCC 204508 / S288c) (Baker's yeast).